We begin with the raw amino-acid sequence, 739 residues long: Catalase-peroxidase 2 (739 aa).

The N-terminal stretch at 1-26 is a signal peptide; it reads MKKSTIPSMSALTLAMSLAFGGAAIA. Positions 105 to 227 form a cross-link, tryptophyl-tyrosyl-methioninium (Trp-Tyr) (with M-253); that stretch reads WHSAGVYRIF…MGATQMGLIY (123 aa). H106 serves as the catalytic Proton acceptor. The segment at residues 227-253 is a cross-link (tryptophyl-tyrosyl-methioninium (Tyr-Met) (with W-105)); it reads YVNPEGPNGVPDPLASAKEIRDTFGRM. H268 lines the heme b pocket.

It belongs to the peroxidase family. Peroxidase/catalase subfamily. Homodimer or homotetramer. It depends on heme b as a cofactor. Post-translationally, formation of the three residue Trp-Tyr-Met cross-link is important for the catalase, but not the peroxidase activity of the enzyme.

The catalysed reaction is H2O2 + AH2 = A + 2 H2O. It carries out the reaction 2 H2O2 = O2 + 2 H2O. Its function is as follows. Bifunctional enzyme with both catalase and broad-spectrum peroxidase activity. The protein is Catalase-peroxidase 2 of Shewanella sp. (strain ANA-3).